The following is a 750-amino-acid chain: Catalase-peroxidase (750 aa).

Residues 112-235 (WHSAGTYRIG…LGAAHMGLIY (124 aa)) constitute a cross-link (tryptophyl-tyrosyl-methioninium (Trp-Tyr) (with M-261)). H113 functions as the Proton acceptor in the catalytic mechanism. Residues 235-261 (YVNPEGHNGNPDPVEAASYIRETFGRM) constitute a cross-link (tryptophyl-tyrosyl-methioninium (Tyr-Met) (with W-112)). H276 lines the heme b pocket.

The protein belongs to the peroxidase family. Peroxidase/catalase subfamily. In terms of assembly, homodimer or homotetramer. Heme b serves as cofactor. Post-translationally, formation of the three residue Trp-Tyr-Met cross-link is important for the catalase, but not the peroxidase activity of the enzyme.

The enzyme catalyses H2O2 + AH2 = A + 2 H2O. It carries out the reaction 2 H2O2 = O2 + 2 H2O. Functionally, bifunctional enzyme with both catalase and broad-spectrum peroxidase activity. In Christiangramia forsetii (strain DSM 17595 / CGMCC 1.15422 / KT0803) (Gramella forsetii), this protein is Catalase-peroxidase.